A 142-amino-acid polypeptide reads, in one-letter code: Large ribosomal subunit protein uL11 (142 aa).

Belongs to the universal ribosomal protein uL11 family. As to quaternary structure, part of the ribosomal stalk of the 50S ribosomal subunit. Interacts with L10 and the large rRNA to form the base of the stalk. L10 forms an elongated spine to which L12 dimers bind in a sequential fashion forming a multimeric L10(L12)X complex. In terms of processing, one or more lysine residues are methylated.

Forms part of the ribosomal stalk which helps the ribosome interact with GTP-bound translation factors. The sequence is that of Large ribosomal subunit protein uL11 from Aliivibrio fischeri (strain MJ11) (Vibrio fischeri).